The sequence spans 200 residues: Pyrrolidone-carboxylate peptidase (200 aa).

Active-site residues include Glu-78, Cys-141, and His-165.

Belongs to the peptidase C15 family. Homotetramer.

The protein localises to the cytoplasm. It carries out the reaction Release of an N-terminal pyroglutamyl group from a polypeptide, the second amino acid generally not being Pro.. Its function is as follows. Removes 5-oxoproline from various penultimate amino acid residues except L-proline. This chain is Pyrrolidone-carboxylate peptidase, found in Lactobacillus helveticus (strain DPC 4571).